Reading from the N-terminus, the 259-residue chain is Imidazole glycerol phosphate synthase subunit HisF (259 aa).

Active-site residues include Asp11 and Asp130.

It belongs to the HisA/HisF family. Heterodimer of HisH and HisF.

Its subcellular location is the cytoplasm. The enzyme catalyses 5-[(5-phospho-1-deoxy-D-ribulos-1-ylimino)methylamino]-1-(5-phospho-beta-D-ribosyl)imidazole-4-carboxamide + L-glutamine = D-erythro-1-(imidazol-4-yl)glycerol 3-phosphate + 5-amino-1-(5-phospho-beta-D-ribosyl)imidazole-4-carboxamide + L-glutamate + H(+). Its pathway is amino-acid biosynthesis; L-histidine biosynthesis; L-histidine from 5-phospho-alpha-D-ribose 1-diphosphate: step 5/9. Functionally, IGPS catalyzes the conversion of PRFAR and glutamine to IGP, AICAR and glutamate. The HisF subunit catalyzes the cyclization activity that produces IGP and AICAR from PRFAR using the ammonia provided by the HisH subunit. The polypeptide is Imidazole glycerol phosphate synthase subunit HisF (Carboxydothermus hydrogenoformans (strain ATCC BAA-161 / DSM 6008 / Z-2901)).